The chain runs to 160 residues: Protein-export protein SecB (160 aa).

The protein belongs to the SecB family. As to quaternary structure, homotetramer, a dimer of dimers. One homotetramer interacts with 1 SecA dimer.

The protein localises to the cytoplasm. Functionally, one of the proteins required for the normal export of preproteins out of the cell cytoplasm. It is a molecular chaperone that binds to a subset of precursor proteins, maintaining them in a translocation-competent state. It also specifically binds to its receptor SecA. In Azorhizobium caulinodans (strain ATCC 43989 / DSM 5975 / JCM 20966 / LMG 6465 / NBRC 14845 / NCIMB 13405 / ORS 571), this protein is Protein-export protein SecB.